The following is a 222-amino-acid chain: Sugar fermentation stimulation protein homolog (222 aa).

The protein belongs to the SfsA family.

The protein is Sugar fermentation stimulation protein homolog of Thermotoga sp. (strain RQ2).